The chain runs to 43 residues: Protein PsbN (43 aa).

The chain crosses the membrane as a helical span at residues 5–27 (TLVAIFISGSLVSFTGYALYTAF).

The protein belongs to the PsbN family.

Its subcellular location is the plastid. It is found in the chloroplast thylakoid membrane. Its function is as follows. May play a role in photosystem I and II biogenesis. The chain is Protein PsbN from Nelumbo lutea (American lotus).